The primary structure comprises 323 residues: uncharacterized protein (323 aa).

The first 45 residues, 1 to 45, serve as a signal peptide directing secretion; it reads MLATLSQIRAWSTEHLIDAAGYWTETADRWEDVFLQMRNQAHAIA. The interval 186-227 is disordered; it reads FKQDGPTPPPPGAPHPSGGADGPYSDPITSMMLPPAGTEAPV. 2 helical membrane passes run 269-289 and 290-310; these read SAEW…VVGT and ALAI…LLGV.

The protein resides in the cell membrane. This is an uncharacterized protein from Mycobacterium tuberculosis (strain CDC 1551 / Oshkosh).